Reading from the N-terminus, the 356-residue chain is Histidinol-phosphate aminotransferase 1 (356 aa).

K217 is subject to N6-(pyridoxal phosphate)lysine.

It belongs to the class-II pyridoxal-phosphate-dependent aminotransferase family. Histidinol-phosphate aminotransferase subfamily. In terms of assembly, homodimer. Pyridoxal 5'-phosphate serves as cofactor.

The catalysed reaction is L-histidinol phosphate + 2-oxoglutarate = 3-(imidazol-4-yl)-2-oxopropyl phosphate + L-glutamate. It participates in amino-acid biosynthesis; L-histidine biosynthesis; L-histidine from 5-phospho-alpha-D-ribose 1-diphosphate: step 7/9. This is Histidinol-phosphate aminotransferase 1 from Burkholderia mallei (strain ATCC 23344).